We begin with the raw amino-acid sequence, 122 residues long: Small ribosomal subunit protein uS13 (122 aa).

The interval 93 to 122 (RLSLPVRGQRTKTNSRTRKGKRKTVAGKKK) is disordered. Residues 101–122 (QRTKTNSRTRKGKRKTVAGKKK) show a composition bias toward basic residues.

It belongs to the universal ribosomal protein uS13 family. As to quaternary structure, part of the 30S ribosomal subunit. Forms a loose heterodimer with protein S19. Forms two bridges to the 50S subunit in the 70S ribosome.

Its function is as follows. Located at the top of the head of the 30S subunit, it contacts several helices of the 16S rRNA. In the 70S ribosome it contacts the 23S rRNA (bridge B1a) and protein L5 of the 50S subunit (bridge B1b), connecting the 2 subunits; these bridges are implicated in subunit movement. Contacts the tRNAs in the A and P-sites. The protein is Small ribosomal subunit protein uS13 of Chlamydia caviae (strain ATCC VR-813 / DSM 19441 / 03DC25 / GPIC) (Chlamydophila caviae).